Here is a 155-residue protein sequence, read N- to C-terminus: MSTEKINFDIHKILTLLPHRYPILLVDRVLELEPHKAIKALKNVTVNEPFFTGHFPKRPVMPGVLIIEALAQAAALLTFAEAQPKDPENTLYYFVGIDNARFKRVVEPGDQLILNVTFERYIRGIWKFKAVAEVDGKVAAEAELMCTVKTADAAP.

The active site involves His54.

This sequence belongs to the thioester dehydratase family. FabZ subfamily.

It localises to the cytoplasm. It carries out the reaction a (3R)-hydroxyacyl-[ACP] = a (2E)-enoyl-[ACP] + H2O. Functionally, involved in unsaturated fatty acids biosynthesis. Catalyzes the dehydration of short chain beta-hydroxyacyl-ACPs and long chain saturated and unsaturated beta-hydroxyacyl-ACPs. The chain is 3-hydroxyacyl-[acyl-carrier-protein] dehydratase FabZ from Burkholderia mallei (strain NCTC 10247).